A 219-amino-acid chain; its full sequence is Cytidylate kinase (219 aa).

21 to 29 (GPAASGKGT) contacts ATP.

The protein belongs to the cytidylate kinase family. Type 1 subfamily.

It is found in the cytoplasm. The enzyme catalyses CMP + ATP = CDP + ADP. The catalysed reaction is dCMP + ATP = dCDP + ADP. This Rickettsia africae (strain ESF-5) protein is Cytidylate kinase.